The primary structure comprises 246 residues: NH(3)-dependent NAD(+) synthetase (246 aa).

Position 29 to 36 (29 to 36) interacts with ATP; sequence GLSGGIDS. Asp-35 provides a ligand contact to Mg(2+). Deamido-NAD(+) is bound at residue Arg-110. Position 130 (Thr-130) interacts with ATP. Residue Glu-135 participates in Mg(2+) binding. ATP is bound by residues Lys-159 and Ser-181.

The protein belongs to the NAD synthetase family. Homodimer.

The catalysed reaction is deamido-NAD(+) + NH4(+) + ATP = AMP + diphosphate + NAD(+) + H(+). It participates in cofactor biosynthesis; NAD(+) biosynthesis; NAD(+) from deamido-NAD(+) (ammonia route): step 1/1. Functionally, catalyzes the ATP-dependent amidation of deamido-NAD to form NAD. Uses ammonia as a nitrogen source. The sequence is that of NH(3)-dependent NAD(+) synthetase from Campylobacter jejuni subsp. jejuni serotype O:6 (strain 81116 / NCTC 11828).